We begin with the raw amino-acid sequence, 99 residues long: Cell division protein FtsB (99 aa).

The Cytoplasmic segment spans residues 1–3; the sequence is MKF. The chain crosses the membrane as a helical span at residues 4 to 21; the sequence is FVIALIVLLGLLQYRLWS. Over 22-99 the chain is Periplasmic; that stretch reads GSNSLPEYFV…GERSVSSPSQ (78 aa). The stretch at 36–73 forms a coiled coil; it reads IAVQQEGNDKLNERNQVLKEEIIDLKSGTEAIEERARN.

Belongs to the FtsB family. As to quaternary structure, part of a complex composed of FtsB, FtsL and FtsQ.

It is found in the cell inner membrane. Essential cell division protein. May link together the upstream cell division proteins, which are predominantly cytoplasmic, with the downstream cell division proteins, which are predominantly periplasmic. The polypeptide is Cell division protein FtsB (Shewanella sp. (strain W3-18-1)).